The primary structure comprises 270 residues: ATP synthase subunit a (270 aa).

Helical transmembrane passes span 37-57 (NVHI…LWVF), 98-118 (IAPL…MDLV), 143-163 (DVNI…YYSI), 217-237 (VVFI…GALP), and 239-259 (AIFH…LTIV).

Belongs to the ATPase A chain family. In terms of assembly, F-type ATPases have 2 components, CF(1) - the catalytic core - and CF(0) - the membrane proton channel. CF(1) has five subunits: alpha(3), beta(3), gamma(1), delta(1), epsilon(1). CF(0) has three main subunits: a(1), b(2) and c(9-12). The alpha and beta chains form an alternating ring which encloses part of the gamma chain. CF(1) is attached to CF(0) by a central stalk formed by the gamma and epsilon chains, while a peripheral stalk is formed by the delta and b chains.

The protein localises to the cell inner membrane. Key component of the proton channel; it plays a direct role in the translocation of protons across the membrane. In Aliivibrio fischeri (strain ATCC 700601 / ES114) (Vibrio fischeri), this protein is ATP synthase subunit a.